Here is a 1210-residue protein sequence, read N- to C-terminus: Disease resistance-like protein DSC2 (1210 aa).

Positions 59-223 (WTHQVFPSFR…KVAKDVSDVL (165 aa)) constitute a TIR domain. Glu134 is a catalytic residue. The NB-ARC domain occupies 241 to 511 (ITRINSLLCL…CLFNGCQVNH (271 aa)). LRR repeat units follow at residues 662–685 (AKFL…IQPL), 686–709 (KNLK…SNAT), 711–732 (LESL…IRGT), 756–780 (ATSL…LPGD), 783–804 (MRSL…PEIS), 805–828 (TNIQ…RLWS), 830–848 (LDKL…PPVP), 849–873 (DGIS…NLSQ), and 940–970 (LPEL…NLSQ).

The protein belongs to the disease resistance NB-LRR family. In terms of assembly, interacts with DSC1.

It carries out the reaction NAD(+) + H2O = ADP-D-ribose + nicotinamide + H(+). In terms of biological role, TIR-NB-LRR receptor-like protein involved in plant defense. Acts as a trigger of hypersensitive response (HR). Functions as a guard of CAMTA3, a negative regulator of immunity, during pathogen infection. This Arabidopsis thaliana (Mouse-ear cress) protein is Disease resistance-like protein DSC2.